The following is a 147-amino-acid chain: Nucleoside diphosphate kinase (147 aa).

The ATP site is built by Lys11, Phe59, Arg87, Thr93, Arg104, and Asn114. The active-site Pros-phosphohistidine intermediate is His117.

It belongs to the NDK family. In terms of assembly, homotetramer. It depends on Mg(2+) as a cofactor.

Its subcellular location is the cytoplasm. It catalyses the reaction a 2'-deoxyribonucleoside 5'-diphosphate + ATP = a 2'-deoxyribonucleoside 5'-triphosphate + ADP. The catalysed reaction is a ribonucleoside 5'-diphosphate + ATP = a ribonucleoside 5'-triphosphate + ADP. Functionally, major role in the synthesis of nucleoside triphosphates other than ATP. The ATP gamma phosphate is transferred to the NDP beta phosphate via a ping-pong mechanism, using a phosphorylated active-site intermediate. This is Nucleoside diphosphate kinase from Anaeromyxobacter sp. (strain K).